The chain runs to 153 residues: Riboflavin synthase (153 aa).

It belongs to the DMRL synthase family. In terms of assembly, homooligomer. The cofactor is Mg(2+).

It carries out the reaction 2 6,7-dimethyl-8-(1-D-ribityl)lumazine + H(+) = 5-amino-6-(D-ribitylamino)uracil + riboflavin. It participates in cofactor biosynthesis; riboflavin biosynthesis; riboflavin from 2-hydroxy-3-oxobutyl phosphate and 5-amino-6-(D-ribitylamino)uracil: step 2/2. With respect to regulation, inhibited by EDTA. In terms of biological role, the relatively low activity of this enzyme suggested that 6,7-dimethyl-8-ribityllumazine might not be its natural substrate. This chain is Riboflavin synthase (ribC), found in Methanothermobacter marburgensis (strain ATCC BAA-927 / DSM 2133 / JCM 14651 / NBRC 100331 / OCM 82 / Marburg) (Methanobacterium thermoautotrophicum).